Here is a 129-residue protein sequence, read N- to C-terminus: Small ribosomal subunit protein uS11 (129 aa).

The protein belongs to the universal ribosomal protein uS11 family. As to quaternary structure, part of the 30S ribosomal subunit. Interacts with proteins S7 and S18. Binds to IF-3.

Its function is as follows. Located on the platform of the 30S subunit, it bridges several disparate RNA helices of the 16S rRNA. Forms part of the Shine-Dalgarno cleft in the 70S ribosome. The protein is Small ribosomal subunit protein uS11 of Mycoplasma mycoides subsp. mycoides SC (strain CCUG 32753 / NCTC 10114 / PG1).